We begin with the raw amino-acid sequence, 140 residues long: Large ribosomal subunit protein uL11 (140 aa).

The protein belongs to the universal ribosomal protein uL11 family. In terms of assembly, part of the ribosomal stalk of the 50S ribosomal subunit. Interacts with L10 and the large rRNA to form the base of the stalk. L10 forms an elongated spine to which L12 dimers bind in a sequential fashion forming a multimeric L10(L12)X complex. Post-translationally, one or more lysine residues are methylated.

Its function is as follows. Forms part of the ribosomal stalk which helps the ribosome interact with GTP-bound translation factors. In Gemmatimonas aurantiaca (strain DSM 14586 / JCM 11422 / NBRC 100505 / T-27), this protein is Large ribosomal subunit protein uL11.